Reading from the N-terminus, the 516-residue chain is Protein P54 (516 aa).

An N-terminal signal peptide occupies residues 1 to 27 (MKKSLLSAVMLSSIALTAVGSPIAAAA). Residues 208–397 (ATAEDKKADL…PAPAPAPNPS (190 aa)) form a disordered region. Over residues 210-236 (AEDKKADLNRKKAEAEAEQARIREQAR) the composition is skewed to basic and acidic residues. 2 stretches are compositionally biased toward low complexity: residues 237–247 (LAEQARQQAAQ) and 257–380 (QAAA…TVTP). A compositionally biased stretch (pro residues) spans 381-395 (APTPTPTPAPAPAPN). Positions 399–516 (SVNGAAIVAE…WYTPDFAVSM (118 aa)) constitute a NlpC/P60 domain. C429 (nucleophile) is an active-site residue. The active-site Proton acceptor is H480. H492 is an active-site residue.

This sequence belongs to the peptidase C40 family.

It is found in the secreted. The protein localises to the cell wall. The sequence is that of Protein P54 from Enterococcus faecium (Streptococcus faecium).